Reading from the N-terminus, the 139-residue chain is Lamprin 0.9 (139 aa).

An N-terminal signal peptide occupies residues Met-1 to Ala-19. 8 repeat units span residues Gly-42 to Tyr-46, Gly-47 to Tyr-51, Gly-52 to Val-56, Ala-57 to Val-61, Ala-62 to Tyr-66, Gly-67 to Tyr-71, Gly-92 to Tyr-96, and Gly-106 to Tyr-110. The tract at residues Gly-42–Tyr-110 is 8 X 5 AA approximate repeats.

As to quaternary structure, the polymeric lamprin chains self-aggregate to form fibers and have secondary structures particularly rich in beta-sheets and in beta-turns.

It is found in the secreted. The protein resides in the extracellular space. It localises to the extracellular matrix. In terms of biological role, self-aggregating protein that is part of the soluble form of lamprin. This is Lamprin 0.9 from Petromyzon marinus (Sea lamprey).